An 842-amino-acid chain; its full sequence is Ionotropic receptor 21a (842 aa).

Residues 1 to 15 (MSYYWVALVLFTAQA) form the signal peptide. A glycan (N-linked (GlcNAc...) asparagine) is linked at Asn325. Transmembrane regions (helical) follow at residues 405-425 (WPVWVALICVYLGGIFPIVFT) and 437-457 (WGEVENMFWYVFGMFTNAFSF). Asn469 carries N-linked (GlcNAc...) asparagine glycosylation. The chain crosses the membrane as a helical span at residues 479-499 (WLFTIIITSCYTGSIIAFVTL). 4 N-linked (GlcNAc...) asparagine glycosylation sites follow: Asn533, Asn558, Asn583, and Asn588. A helical membrane pass occupies residues 680 to 700 (MFLLMALGYFLGATALVSEIV). The interval 722–745 (WSSASSGSMLRTNAEQLSHDKRKA) is disordered. Residues Asn765 and Asn797 are each glycosylated (N-linked (GlcNAc...) asparagine).

The protein belongs to the glutamate-gated ion channel (TC 1.A.10.1) family. Expressed in the dorsal organ cool cells. In the antenna, expressed in approximately six neurons in the arista as well as five to ten neurons near the third chamber of the sacculus.

The protein resides in the cell membrane. Functionally, integral part of a neural sensory system in the antenna that provides the neural basis for the response to environmental changes in temperature (thermosensation). Together with Ir25a and Ir93a, mediates the response of the dorsal organ cool cells, a trio of cool-responsive neurons, to cooling and is required for cool avoidance behavior. This chain is Ionotropic receptor 21a, found in Drosophila melanogaster (Fruit fly).